A 317-amino-acid polypeptide reads, in one-letter code: Ribonuclease Z (317 aa).

Zn(2+) is bound by residues H61, H63, D65, H66, H139, D210, and H268. The active-site Proton acceptor is D65.

It belongs to the RNase Z family. In terms of assembly, homodimer. It depends on Zn(2+) as a cofactor.

The catalysed reaction is Endonucleolytic cleavage of RNA, removing extra 3' nucleotides from tRNA precursor, generating 3' termini of tRNAs. A 3'-hydroxy group is left at the tRNA terminus and a 5'-phosphoryl group is left at the trailer molecule.. Inhibited by high salt concentrations. Zinc phosphodiesterase, which displays some tRNA 3'-processing endonuclease activity. Probably involved in tRNA maturation, by removing a 3'-trailer from precursor tRNA. Can also catalyze the 5' end cleavage of the 5S rRNA. In Haloferax volcanii (strain ATCC 29605 / DSM 3757 / JCM 8879 / NBRC 14742 / NCIMB 2012 / VKM B-1768 / DS2) (Halobacterium volcanii), this protein is Ribonuclease Z.